Reading from the N-terminus, the 196-residue chain is SPRY domain-containing protein 7 (196 aa).

Residues 1–184 enclose the B30.2/SPRY domain; that stretch reads MAASVFCCLR…FSEFYHTPPP (184 aa).

The sequence is that of SPRY domain-containing protein 7 (SPRYD7) from Gallus gallus (Chicken).